Reading from the N-terminus, the 176-residue chain is Large ribosomal subunit protein uL6 (176 aa).

The protein belongs to the universal ribosomal protein uL6 family. As to quaternary structure, part of the 50S ribosomal subunit.

Its function is as follows. This protein binds to the 23S rRNA, and is important in its secondary structure. It is located near the subunit interface in the base of the L7/L12 stalk, and near the tRNA binding site of the peptidyltransferase center. This chain is Large ribosomal subunit protein uL6, found in Methanospirillum hungatei JF-1 (strain ATCC 27890 / DSM 864 / NBRC 100397 / JF-1).